We begin with the raw amino-acid sequence, 612 residues long: Anaerobic magnesium-protoporphyrin IX monomethyl ester cyclase (612 aa).

A B12-binding domain is found at 9 to 143; that stretch reads NYHSGGAEIA…KAYEADNFAE (135 aa). Positions 190–417 constitute a Radical SAM core domain; sequence PLGVRVAIPN…MKPKALTRGE (228 aa). [4Fe-4S] cluster is bound by residues Cys204, Cys208, and Cys211.

It belongs to the BchE family. [4Fe-4S] cluster serves as cofactor. Adenosylcob(III)alamin is required as a cofactor.

It carries out the reaction Mg-protoporphyrin IX 13-monomethyl ester + 3 S-adenosyl-L-methionine + H2O = 3,8-divinyl protochlorophyllide a + 3 5'-deoxyadenosine + 3 L-methionine + 4 H(+). It participates in porphyrin-containing compound metabolism; bacteriochlorophyll biosynthesis (light-independent). Involved in the tetrapyrrole biosynthetic pathways leading to chlorophyll and bacteriochlorophyll (BChl). Catalyzes the anaerobic formation of the isocyclic ring (E-ring) in Mg-protoporphyrin monomethyl ester (MPE) to yield protochlorophyllide a (PChlide a) via a six-electron oxidation and the formation of an oxo group at position C13 using oxygen from a water molecule. The sequence is that of Anaerobic magnesium-protoporphyrin IX monomethyl ester cyclase from Cereibacter sphaeroides (strain ATCC 17023 / DSM 158 / JCM 6121 / CCUG 31486 / LMG 2827 / NBRC 12203 / NCIMB 8253 / ATH 2.4.1.) (Rhodobacter sphaeroides).